The sequence spans 178 residues: NAD(P)H-quinone oxidoreductase subunit J (178 aa).

It belongs to the complex I 30 kDa subunit family. NDH-1 can be composed of about 15 different subunits; different subcomplexes with different compositions have been identified which probably have different functions.

It localises to the cellular thylakoid membrane. The catalysed reaction is a plastoquinone + NADH + (n+1) H(+)(in) = a plastoquinol + NAD(+) + n H(+)(out). It carries out the reaction a plastoquinone + NADPH + (n+1) H(+)(in) = a plastoquinol + NADP(+) + n H(+)(out). Its function is as follows. NDH-1 shuttles electrons from an unknown electron donor, via FMN and iron-sulfur (Fe-S) centers, to quinones in the respiratory and/or the photosynthetic chain. The immediate electron acceptor for the enzyme in this species is believed to be plastoquinone. Couples the redox reaction to proton translocation, and thus conserves the redox energy in a proton gradient. Cyanobacterial NDH-1 also plays a role in inorganic carbon-concentration. This Crocosphaera subtropica (strain ATCC 51142 / BH68) (Cyanothece sp. (strain ATCC 51142)) protein is NAD(P)H-quinone oxidoreductase subunit J.